The primary structure comprises 2193 residues: Highly reducing polyketide synthase VdtX (2193 aa).

The Ketosynthase family 3 (KS3) domain maps to 1–417; that stretch reads MAICGIAVRL…GVNAHVIIES (417 aa). Catalysis depends on for beta-ketoacyl synthase activity residues C170, H306, and H340. Residues 513 to 809 are malonyl-CoA:ACP transacylase (MAT) domain; sequence VFAGQGAQWP…HPYVPCLIRF (297 aa). Positions 877-1001 are N-terminal hotdog fold; the sequence is HELLGTRVVD…GEVAQENLSR (125 aa). The tract at residues 877 to 1128 is dehydratase (DH) domain; that stretch reads HELLGTRVVD…DIVLRPLGAN (252 aa). The PKS/mFAS DH domain occupies 877-1202; the sequence is HELLGTRVVD…LQRQPKPSSE (326 aa). H909 acts as the Proton acceptor; for dehydratase activity in catalysis. Residues 1032–1202 form a C-terminal hotdog fold region; it reads SVTSNTVSGR…LQRQPKPSSE (171 aa). D1093 (proton donor; for dehydratase activity) is an active-site residue. Residues 1256–1390 are methyltransferase (CMet) domain; it reads NYLNEPQQRI…DRWDSILKAA (135 aa). Residues 1575 to 1783 are enoyl reductase (ER) domain; it reads GQQVQLLGDD…SGQHIGQLRL (209 aa). The interval 1807-1981 is ketoreductase (KR) domain; it reads ASYLLVGGLG…ASVIDIGEVQ (175 aa). Residues 2102–2183 enclose the Carrier domain; it reads PSATQFVSLE…AMGEHVIREL (82 aa). S2143 bears the O-(pantetheine 4'-phosphoryl)serine mark.

Functionally, highly reducing polyketide synthase; part of the gene cluster that mediates the biosynthesis of viriditoxin, one of the 'classical' secondary metabolites produced by fungi and that has antibacterial activity. The first step is performed by the polyketide synthase VdtA which condenses one acetyl-CoA and 6 malonyl-CoA units to form the heptaketide monomer backbone of viriditoxin. The product of VdtA is then O-methylated on C7 by the O-methyltransferase VdtC. The O-methyl group is important for the stereoselective coupling of the monomers at the final step of viriditoxin biosynthesis. The short-chain dehydrogenase/reductase VdtF is involved in the reduction of the C3-C4 double bond. The FAD-binding monooxygenase VdtE then converts the ketone group into a methyl-ester group to yield semi-viriditoxin. Finally, the laccase VdtB is involved in dimerization of 2 semi-viriditoxin molecules to yield the final viriditoxin. The non-catalytic carboxylesterase-like protein VdtD affects the stereochemistical outcome of the coupling. The highly reducing polyketide synthase VdtX is not involved in viriditoxin synthesis, but might possibly play a role in the production of additional metabolites not identified yet. The sequence is that of Highly reducing polyketide synthase VdtX from Byssochlamys spectabilis (Paecilomyces variotii).